Here is an 888-residue protein sequence, read N- to C-terminus: Pumilio homology domain family member 4 (888 aa).

Phosphothreonine is present on residues T205, T212, and T252. Disordered regions lie at residues 236 to 270 (KAKK…IPPT) and 467 to 551 (MNSA…RKIE). Positions 243–270 (GANNTAKTRTQSISFDNTPSSTSFIPPT) are enriched in polar residues. A Phosphoserine modification is found at S256. 2 stretches are compositionally biased toward low complexity: residues 478 to 499 (NNNS…YNNK) and 521 to 543 (NNNN…NSNS). Positions 539 to 888 (TNSNSAEKQR…RIIGMLHLDS (350 aa)) constitute a PUM-HD domain. 8 Pumilio repeats span residues 563–598 (QYIG…AIFE), 599–634 (ETKD…VLTK), 635–671 (ISSP…IVVD), 672–707 (SLRP…FIFD), 708–743 (AISD…NLCD), 744–783 (KLLA…KIVH), 784–821 (LLKP…EILN), and 823–861 (GGET…RLSE).

Functionally, is not essential for haploid growth, but may affect diploid formation. The sequence is that of Pumilio homology domain family member 4 (PUF4) from Saccharomyces cerevisiae (strain ATCC 204508 / S288c) (Baker's yeast).